A 344-amino-acid chain; its full sequence is uncharacterized protein (344 aa).

This is an uncharacterized protein from Aquifex aeolicus (strain VF5).